The following is a 121-amino-acid chain: Large ribosomal subunit protein uL14 (121 aa).

Belongs to the universal ribosomal protein uL14 family. Part of the 50S ribosomal subunit. Forms a cluster with proteins L3 and L19. In the 70S ribosome, L14 and L19 interact and together make contacts with the 16S rRNA in bridges B5 and B8.

Its function is as follows. Binds to 23S rRNA. Forms part of two intersubunit bridges in the 70S ribosome. The sequence is that of Large ribosomal subunit protein uL14 from Synechococcus sp. (strain CC9605).